Reading from the N-terminus, the 355-residue chain is S-methyl-5'-thioadenosine phosphorylase (355 aa).

Phosphate-binding positions include T45, 91 to 92, and 124 to 125; these read RH and SA. Position 226 (M226) interacts with substrate. Residue S227 participates in phosphate binding. A substrate-binding site is contributed by 250-252; sequence DYD.

This sequence belongs to the PNP/MTAP phosphorylase family. MTAP subfamily. As to quaternary structure, homotrimer.

Its subcellular location is the cytoplasm. It is found in the nucleus. The catalysed reaction is S-methyl-5'-thioadenosine + phosphate = 5-(methylsulfanyl)-alpha-D-ribose 1-phosphate + adenine. It participates in amino-acid biosynthesis; L-methionine biosynthesis via salvage pathway; S-methyl-5-thio-alpha-D-ribose 1-phosphate from S-methyl-5'-thioadenosine (phosphorylase route): step 1/1. Its function is as follows. Catalyzes the reversible phosphorylation of S-methyl-5'-thioadenosine (MTA) to adenine and 5-methylthioribose-1-phosphate. Involved in the breakdown of MTA, a major by-product of polyamine biosynthesis. Responsible for the first step in the methionine salvage pathway after MTA has been generated from S-adenosylmethionine. Has broad substrate specificity with 6-aminopurine nucleosides as preferred substrates. The sequence is that of S-methyl-5'-thioadenosine phosphorylase from Emericella nidulans (strain FGSC A4 / ATCC 38163 / CBS 112.46 / NRRL 194 / M139) (Aspergillus nidulans).